A 175-amino-acid polypeptide reads, in one-letter code: MALREIIIIPDKQLRLISKPVETVSAEVRRLADDMFETMYEAPGIGLAAIQVAQPVRLITMDLVRKEGNSLTEPRAFINPEVISASEEMNVYEEGCLSIPEYYAEVERPKQVRIRYTDLDGNVKEEDADGLFATCIQHEIDHLNGVLFVDHISKLKRAMVMRKFEKAAKRGIKYV.

Cys96 and His138 together coordinate Fe cation. Residue Glu139 is part of the active site. Fe cation is bound at residue His142.

This sequence belongs to the polypeptide deformylase family. It depends on Fe(2+) as a cofactor.

It catalyses the reaction N-terminal N-formyl-L-methionyl-[peptide] + H2O = N-terminal L-methionyl-[peptide] + formate. Functionally, removes the formyl group from the N-terminal Met of newly synthesized proteins. Requires at least a dipeptide for an efficient rate of reaction. N-terminal L-methionine is a prerequisite for activity but the enzyme has broad specificity at other positions. The protein is Peptide deformylase of Rhodopseudomonas palustris (strain BisB18).